The chain runs to 121 residues: Small ribosomal subunit protein uS13 (121 aa).

The interval 93 to 121 (RGLPVRGQNTKNNARTRKGPRRTVANKKK) is disordered. Residues 106 to 121 (ARTRKGPRRTVANKKK) show a composition bias toward basic residues.

This sequence belongs to the universal ribosomal protein uS13 family. As to quaternary structure, part of the 30S ribosomal subunit. Forms a loose heterodimer with protein S19. Forms two bridges to the 50S subunit in the 70S ribosome.

In terms of biological role, located at the top of the head of the 30S subunit, it contacts several helices of the 16S rRNA. In the 70S ribosome it contacts the 23S rRNA (bridge B1a) and protein L5 of the 50S subunit (bridge B1b), connecting the 2 subunits; these bridges are implicated in subunit movement. Contacts the tRNAs in the A and P-sites. In Bacillus pumilus (strain SAFR-032), this protein is Small ribosomal subunit protein uS13.